The sequence spans 172 residues: MEHVSKRSIGQFFKRKTSTVDGSKSQKCGTTNQLRKLLHKRRVQKQAVPVESQYRIPGDFRDNQSVRVKNSMYNSSPSVTPSTHHINERYVRYDINTRPLVVVLAISIVFFGCLLVLKDIIIQSSENILSVSKWKIIGASFMGTPYTGLLTGLVGPLLSPFSAVSSWLSFIF.

The Lumenal segment spans residues 1 to 101 (MEHVSKRSIG…RYDINTRPLV (101 aa)). A helical membrane pass occupies residues 102–122 (VVLAISIVFFGCLLVLKDIII). The Cytoplasmic segment spans residues 123–145 (QSSENILSVSKWKIIGASFMGTP). A helical membrane pass occupies residues 146 to 164 (YTGLLTGLVGPLLSPFSAV). At 165–172 (SSWLSFIF) the chain is on the lumenal side.

It localises to the endoplasmic reticulum membrane. This is an uncharacterized protein from Saccharomyces cerevisiae (strain ATCC 204508 / S288c) (Baker's yeast).